The following is a 114-amino-acid chain: uncharacterized protein (114 aa).

2 helical membrane passes run 14–34 and 75–95; these read VMSA…CFLL and VIII…HPVA.

The protein localises to the membrane. This is an uncharacterized protein from Homo sapiens (Human).